Here is a 109-residue protein sequence, read N- to C-terminus: Large ribosomal subunit protein uL24 (109 aa).

A disordered region spans residues 85 to 109 (KYGTDPKTNKKVRLSRKTNNLVGGQ).

It belongs to the universal ribosomal protein uL24 family. Part of the 50S ribosomal subunit.

One of two assembly initiator proteins, it binds directly to the 5'-end of the 23S rRNA, where it nucleates assembly of the 50S subunit. Functionally, one of the proteins that surrounds the polypeptide exit tunnel on the outside of the subunit. The sequence is that of Large ribosomal subunit protein uL24 from Mycoplasmoides gallisepticum (strain R(low / passage 15 / clone 2)) (Mycoplasma gallisepticum).